The primary structure comprises 371 residues: 4-hydroxy-3-methylbut-2-en-1-yl diphosphate synthase (flavodoxin) (371 aa).

Residues Cys270, Cys273, Cys305, and Glu312 each coordinate [4Fe-4S] cluster.

It belongs to the IspG family. [4Fe-4S] cluster serves as cofactor.

The enzyme catalyses (2E)-4-hydroxy-3-methylbut-2-enyl diphosphate + oxidized [flavodoxin] + H2O + 2 H(+) = 2-C-methyl-D-erythritol 2,4-cyclic diphosphate + reduced [flavodoxin]. Its pathway is isoprenoid biosynthesis; isopentenyl diphosphate biosynthesis via DXP pathway; isopentenyl diphosphate from 1-deoxy-D-xylulose 5-phosphate: step 5/6. Converts 2C-methyl-D-erythritol 2,4-cyclodiphosphate (ME-2,4cPP) into 1-hydroxy-2-methyl-2-(E)-butenyl 4-diphosphate. This chain is 4-hydroxy-3-methylbut-2-en-1-yl diphosphate synthase (flavodoxin), found in Shewanella woodyi (strain ATCC 51908 / MS32).